A 364-amino-acid chain; its full sequence is MGSTGETQMSPAQILDEEANFALQLISSSVLPMVLKTAIELDLLEIMAKAGPGALLPPSDIASHLPTKNPNAPVMLDRILRLLASYSILICSLRDLPDGKVERLYGLASVCKFLTRNEDGVSVSPLCLMNQDKVLMESWYHLKDAILEGGIPFNKAYGMTAFEYHGTDPRFNKVFNKGMSVHSKMAMKKILETYKGFEGLASLVDVGGGTGAVVSTIVSKYPSIKGINFDLPHVIADAPAFPGVENVGGDMFVSVPKADAVFMKWICHDWSDEHCLTFLKNCYDALPENGKVILVECILPVAPDTSLATKGVMHVDVIMLAHNPGGKERTDREFESLARGAGFKGFEVMCCAFNTHVIEFRKKA.

129-135 (MNQDKVL) contributes to the substrate binding site. A substrate binding region spans residues 161–179 (AFEYHGTDPRFNKVFNKGM). The S-adenosyl-L-methionine site is built by glycine 207, aspartate 230, aspartate 250, methionine 251, and lysine 264. The active-site Proton acceptor is the histidine 268.

The protein belongs to the class I-like SAM-binding methyltransferase superfamily. Cation-independent O-methyltransferase family. COMT subfamily. In terms of assembly, homodimer.

It catalyses the reaction (E)-caffeate + S-adenosyl-L-methionine = (E)-ferulate + S-adenosyl-L-homocysteine + H(+). It functions in the pathway aromatic compound metabolism; phenylpropanoid biosynthesis. Catalyzes the conversion of caffeic acid to ferulic acid and of 5-hydroxyferulic acid to sinapic acid. The resulting products may subsequently be converted to the corresponding alcohols that are incorporated into lignins. This Populus tremuloides (Quaking aspen) protein is Caffeic acid 3-O-methyltransferase 2 (OMT2).